The primary structure comprises 519 residues: Importin subunit alpha-9 (519 aa).

Positions 1 to 29 are disordered; that stretch reads MADDGSASNRRDPIKSSVGNVAGQRRRKQ. ARM repeat units lie at residues 116–156, 158–197, 200–239, 244–283, 286–326, 335–374, 377–416, and 429–468; these read FPPV…NIAA, KPEE…NVAG, EDLR…NLIK, KAAA…YLSA, DIAT…NFVA, ILIR…NIAA, IEHK…NLCV, and QEHL…LVLR.

Belongs to the importin alpha family. In terms of assembly, forms a complex with importin subunit beta-1.

Its subcellular location is the nucleus envelope. In terms of biological role, binds to conventional NLS motifs and mediates nuclear protein import across the nuclear envelope. Acts as a cellular receptor for the nuclear import of the virD2 protein of Agrobacterium, but is not essential for Agrobacterium-mediated root transformation. This is Importin subunit alpha-9 from Arabidopsis thaliana (Mouse-ear cress).